The chain runs to 944 residues: MLDDYYTWTYPDIPENVAQELLQLNGSLVVVGVVGRSDCDLANKMLAFGMEPPDDHTPEDGQIQCYYKPGTFSLLLHFESTYDAEISGQMIDVCIEDVDTPFDIDSFFERIRCRFVRMMLLALHVCHIVVYVENGLTFDPTLLTVFQLAKFAREQHLMQFLPQMLRETPAARISERTRLCAPRILFLFENFPGDEPKTRESVSTCEFQMEDCIYELLGRYNIVTNSSSNSLVALPNNKQFVFFNAHEELRDDKLLKAIDCLNETMYKPDLKEEEEDLEILAMAPFDGFVKPFTMPVYEKEWENLQYQEDHTVWNFLQRHVQDALVGCFDAGSFKQHAQQGPFQLLNSQEWHDCMATMHKLLVENAKDPDHETSNEEYKLFLKNFDEDLNYEKKFWAHLCELGLKKGIAAYKNAAPANYGTATHRQLLADATLAFEEEGRGPQAQAALAKLAAICHNHWEDGRQQCELLSLRSHPCTLPKNMPHEKHNSGVIHISTCNCGRTQGRREDPFNLRQANYEFYELIAQMCNLCVKVKQYQFPIFEPSVSDYRAAAFEAAFPLLNTGKSGAPQDEDAGEDEAEEEEGQERELPTKKKLQNTASNCCSHPLSPTFGSDLNMSIAGFGASLKESQASSEQLSNSEQNTTSSGTSSADTENELVVELQEPAKKEAREDVGPTDAVSTSTTEYLPGLVHTVSNFGLLPLFPSWSLACVGPSSIYSHNTGLQEHFQSGFLSGANFLLPWDVQLRLVHALKQQYQQQHHGKKQQRWKKQGDRLSLKIFVGMEYECSRGHRFMMCAPDRVLRGGADIERDTCSKVVHNNMPLYYPCPCRSQRNFLAQLMRIHVVTPKAPVNIIVDPKVCVGRYTFTLGSIVPPRLSQSAYWIIRLPYVYQGDDVLIAPPDHLDPDYPLAGGYLLPGMFGVVETDPTLDLNEPGMMGASAAGNFTRI.

Disordered regions lie at residues 560 to 597 and 628 to 653; these read NTGK…QNTA and QASS…DTEN. Residues 568 to 583 show a composition bias toward acidic residues; the sequence is QDEDAGEDEAEEEEGQ. The span at 628–650 shows a compositional bias: polar residues; that stretch reads QASSEQLSNSEQNTTSSGTSSAD.

The protein belongs to the SMG8 family.

Its function is as follows. Involved in nonsense-mediated decay (NMD) of mRNAs containing premature stop codons. Probable component of kinase complex containing nonC and recruited to stalled ribosomes. In Drosophila simulans (Fruit fly), this protein is Nonsense-mediated mRNA decay factor SMG8.